We begin with the raw amino-acid sequence, 102 residues long: Monothiol glutaredoxin-S6 (102 aa).

A Glutaredoxin domain is found at 1–101 (MESVRSLVED…AMLRRAGAIW (101 aa)). Position 21 (C21) interacts with [2Fe-2S] cluster.

It belongs to the glutaredoxin family. CC-type subfamily.

It localises to the cytoplasm. In terms of biological role, may only reduce GSH-thiol disulfides, but not protein disulfides. The protein is Monothiol glutaredoxin-S6 (GRXS6) of Arabidopsis thaliana (Mouse-ear cress).